Here is a 1366-residue protein sequence, read N- to C-terminus: DNA-directed RNA polymerase subunit beta (1366 aa).

This sequence belongs to the RNA polymerase beta chain family. As to quaternary structure, the RNAP catalytic core consists of 2 alpha, 1 beta, 1 beta' and 1 omega subunit. When a sigma factor is associated with the core the holoenzyme is formed, which can initiate transcription.

It catalyses the reaction RNA(n) + a ribonucleoside 5'-triphosphate = RNA(n+1) + diphosphate. In terms of biological role, DNA-dependent RNA polymerase catalyzes the transcription of DNA into RNA using the four ribonucleoside triphosphates as substrates. In Marinomonas sp. (strain MWYL1), this protein is DNA-directed RNA polymerase subunit beta.